The chain runs to 530 residues: ATP-dependent RNA helicase DBP3 (530 aa).

Residues 1–20 (MSKDEIKDKKRKSEEYEVVD) show a composition bias toward basic and acidic residues. The segment at 1–77 (MSKDEIKDKK…VASVSTSSTV (77 aa)) is disordered. The stretch at 19 to 58 (VDKKKHKKDKKDKKEKKDKKEKKLKKDKKDKKDKKETKSE) forms a coiled coil. The span at 21-50 (KKKHKKDKKDKKEKKDKKEKKLKKDKKDKK) shows a compositional bias: basic residues. Over residues 67–77 (SVASVSTSSTV) the composition is skewed to low complexity. Residues 117 to 143 (LSFSHISLDSRIQAEISKFPKPTPIQA) carry the Q motif motif. The region spanning 146-322 (WPYLLAGKDV…STFMNSPIKV (177 aa)) is the Helicase ATP-binding domain. Residue 159–166 (AETGSGKT) coordinates ATP. The DEAD box signature appears at 269–272 (DEAD). The 150-residue stretch at 351-500 (KLLELLKKYQ…PVPEELKKFG (150 aa)) folds into the Helicase C-terminal domain.

It belongs to the DEAD box helicase family. DDX5/DBP2 subfamily.

The protein localises to the nucleus. Its subcellular location is the nucleolus. It catalyses the reaction ATP + H2O = ADP + phosphate + H(+). ATP-dependent RNA helicase required for 60S ribosomal subunit synthesis. Involved in efficient pre-rRNA processing, predominantly at site A3, which is necessary for the normal formation of 25S and 5.8S rRNAs. In Vanderwaltozyma polyspora (strain ATCC 22028 / DSM 70294 / BCRC 21397 / CBS 2163 / NBRC 10782 / NRRL Y-8283 / UCD 57-17) (Kluyveromyces polysporus), this protein is ATP-dependent RNA helicase DBP3 (DBP3).